Reading from the N-terminus, the 1159-residue chain is MVDFLAENNLCGQAILRIVSRGNAIIAELLRLSEFVPSVFRLKDKADQQKYGDIIFDFSYFKGPEVCEGRLEAKPELQDLDEEFRENNIEILTRFYLAFESVHKYIVDLNRYLEDLNEGIYIQQTLETVLLNEDGKQLLCEALYLYGVMLLVIDQKIEGEVRERMLVAYYRYSAARSSVDSNMDDICKLLRSTGYSSQPGAKRPPNYPESYFSRVPISETFISMVIGRLRSDDIYNQVSAYPLPEHRSTALATQAAILYVILYFHPPTLHTHQAKMREIVDKYFPDNWVISIYMGITVNLMEVWEPYKAAKTALNYTLDLPNIKEQASRYAKIIESLHPQVQQFLKEGFLREEFVLDNIPKLLNCLRDCNVAIRWLMLHTADSAYDPNNKRLRQVKDQVLADSKYNPKILFQLLLDTAQFEFLLKEMFKQMLSEKQNKWESYKKEGSERMTELADVFSGVKPLTRVEKNEHLQAWFREIAKQIHSLNYDDSTAAGRKTVQLIQALEEVQEFHQLETNLQVCQFLADTRKFLHQMIRTINIKEEVLITMQIVGDLSYAWQLIDSFTAIMQESIRANPSMVTKLRATFLKLASALDLPLLRINQANSPDLLSVSQYYSGELVFYVRKVLQIIPESMFTSLAKIIKLQTHDIIEVPTRLDKDKLRDYAQLGARYEVAKLTNAISIFTEGILMMKTTLVGIIKVDPKQLLEDGIRKELVKRVAVALHKGLIFNSRAKPSELLPKLKDMAATMDGFHRSFEYIQDYVSIYGLKIWQEEVSRIVNYNVEQECNNFLRTKIQDWQSMYQSTHIPIPKFPPVDESMTFIGRLCREILRITDPKVTCYIDQMNTWYDMKTHQEVTNNHLFSEINDSLGTFGLNGLDRLLCFMIVKELQNFIRLYQRLILRDKSGQETLRALQKVVTPVKGIVANSAKIYSAAIAKTQKIWPAYLDAIMKVGQMQVLRQQIANELNYSCKFDSKHLAGALENFNEAILADIQAHYQDPSLPCPREDNTLLYEITAYLEAAGTHNPLNKIYITTKQLSFFPIVNFLFLVAQLPKLQYNKNLGMTCRKPADPIDWVPLVLGLLTLLKQFHSRYTEQFLALIGQFIRSSLEQSTSQKIPEMPADVVGALMFLEDYVHFAKLPRRVVEAHVPNFIFDEFRTIQ.

The protein belongs to the strumpellin family. As to quaternary structure, component of the WASH complex.

Its subcellular location is the early endosome. Acts at least in part as component of the WASH complex which seems to regulate washc1 nucleation-promoting factor (NPF) activity and is required for its membrane targeting during endosomal sorting. This chain is WASH complex subunit 5, found in Xenopus tropicalis (Western clawed frog).